Reading from the N-terminus, the 423-residue chain is Glucuronoxylanase XynC (423 aa).

A signal peptide spans 1–33; sequence MMSSVKKTICVLLVCFTMMSVMLLGPGVTEVSA. Glu-172 functions as the Proton donor in the catalytic mechanism. The active-site Nucleophile is Glu-261.

The protein belongs to the glycosyl hydrolase 30 family.

Its subcellular location is the secreted. It carries out the reaction Endohydrolysis of (1-&gt;4)-beta-D-xylosyl links in some glucuronoarabinoxylans.. It functions in the pathway glycan degradation; xylan degradation. Functionally, catalyzes the depolymerization of methylglucuronoxylan (MeGAXn). It cleaves the beta-1,4-xylosidic bond penultimate to that linking carbon one of the xylose residue substituted with alpha-1,2-linked 4-O-methyl-D-glucuronate (MeGA). The protein is Glucuronoxylanase XynC (xynC) of Bacillus subtilis.